A 321-amino-acid chain; its full sequence is GTP 3',8-cyclase (321 aa).

Residues 5 to 233 enclose the Radical SAM core domain; it reads SFNRVIDYIR…QGSSKIYTLE (229 aa). Arginine 14 is a GTP binding site. [4Fe-4S] cluster contacts are provided by cysteine 21 and cysteine 25. Tyrosine 27 contacts S-adenosyl-L-methionine. Cysteine 28 serves as a coordination point for [4Fe-4S] cluster. Arginine 64 is a binding site for GTP. Glycine 68 provides a ligand contact to S-adenosyl-L-methionine. Residue serine 95 participates in GTP binding. Serine 119 lines the S-adenosyl-L-methionine pocket. Lysine 155 provides a ligand contact to GTP. Methionine 189 serves as a coordination point for S-adenosyl-L-methionine. [4Fe-4S] cluster contacts are provided by cysteine 249 and cysteine 252. Position 254 to 256 (254 to 256) interacts with GTP; sequence RIR. Residue cysteine 266 coordinates [4Fe-4S] cluster.

The protein belongs to the radical SAM superfamily. MoaA family. As to quaternary structure, monomer and homodimer. [4Fe-4S] cluster serves as cofactor.

It carries out the reaction GTP + AH2 + S-adenosyl-L-methionine = (8S)-3',8-cyclo-7,8-dihydroguanosine 5'-triphosphate + 5'-deoxyadenosine + L-methionine + A + H(+). It participates in cofactor biosynthesis; molybdopterin biosynthesis. Functionally, catalyzes the cyclization of GTP to (8S)-3',8-cyclo-7,8-dihydroguanosine 5'-triphosphate. The chain is GTP 3',8-cyclase from Helicobacter pylori (strain J99 / ATCC 700824) (Campylobacter pylori J99).